We begin with the raw amino-acid sequence, 89 residues long: Defensin-like protein 250 (89 aa).

Residues 1 to 23 (MKLAAIFLVSCVLLSLLPSLTIA) form the signal peptide. 4 disulfide bridges follow: Cys29–Cys86, Cys40–Cys69, Cys48–Cys79, and Cys67–Cys81.

This sequence belongs to the DEFL family.

It is found in the secreted. This Arabidopsis thaliana (Mouse-ear cress) protein is Defensin-like protein 250 (SCRL8).